Consider the following 487-residue polypeptide: Malonate-semialdehyde dehydrogenase 2 (487 aa).

NAD(+) is bound by residues Phe154, Lys178, Glu181, Arg182, and Ser231. The active-site Nucleophile is Cys286. Glu386 lines the NAD(+) pocket.

It belongs to the aldehyde dehydrogenase family. IolA subfamily. As to quaternary structure, homotetramer.

The catalysed reaction is 3-oxopropanoate + NAD(+) + CoA + H2O = hydrogencarbonate + acetyl-CoA + NADH + H(+). It catalyses the reaction 2-methyl-3-oxopropanoate + NAD(+) + CoA + H2O = propanoyl-CoA + hydrogencarbonate + NADH + H(+). It participates in polyol metabolism; myo-inositol degradation into acetyl-CoA; acetyl-CoA from myo-inositol: step 7/7. Its function is as follows. Catalyzes the oxidation of malonate semialdehyde (MSA) and methylmalonate semialdehyde (MMSA) into acetyl-CoA and propanoyl-CoA, respectively. Is involved in a myo-inositol catabolic pathway. Bicarbonate, and not CO2, is the end-product of the enzymatic reaction. In Bacillus thuringiensis subsp. konkukian (strain 97-27), this protein is Malonate-semialdehyde dehydrogenase 2.